Consider the following 745-residue polypeptide: Chitin synthase D (745 aa).

5 helical membrane-spanning segments follow: residues 26–46, 55–75, 412–432, 434–454, and 464–484; these read LAHRGIFLPVMIVTLPLPVHL, VLMLQWFAFGMFSVLLIIPWL, TTALLFFIIALSLITTSSSIN, LPVGFIAISLGLNYVLMFYLG, and LFPLMFILNPFFNWLYMVYGI. 2 disordered regions span residues 613–635 and 672–745; these read TGDNDNMKPYPDRQPRDTSSLHQ and ILPH…ESMV. The segment covering 707-720 has biased composition (polar residues); sequence NASTRGSMEGNTPE.

Belongs to the chitin synthase family. Class VI subfamily.

It is found in the cell membrane. The catalysed reaction is [(1-&gt;4)-N-acetyl-beta-D-glucosaminyl](n) + UDP-N-acetyl-alpha-D-glucosamine = [(1-&gt;4)-N-acetyl-beta-D-glucosaminyl](n+1) + UDP + H(+). In terms of biological role, polymerizes chitin, a structural polymer of the cell wall and septum, by transferring the sugar moiety of UDP-GlcNAc to the non-reducing end of the growing chitin polymer. The protein is Chitin synthase D (chsD) of Aspergillus fumigatus (strain ATCC MYA-4609 / CBS 101355 / FGSC A1100 / Af293) (Neosartorya fumigata).